The primary structure comprises 333 residues: tRNA U34 carboxymethyltransferase (333 aa).

Residues lysine 97, tryptophan 111, lysine 116, glycine 136, 158-160, 189-190, methionine 205, tyrosine 209, and arginine 324 each bind carboxy-S-adenosyl-L-methionine; these read DPS and IE.

It belongs to the class I-like SAM-binding methyltransferase superfamily. CmoB family. In terms of assembly, homotetramer.

The catalysed reaction is carboxy-S-adenosyl-L-methionine + 5-hydroxyuridine(34) in tRNA = 5-carboxymethoxyuridine(34) in tRNA + S-adenosyl-L-homocysteine + H(+). Functionally, catalyzes carboxymethyl transfer from carboxy-S-adenosyl-L-methionine (Cx-SAM) to 5-hydroxyuridine (ho5U) to form 5-carboxymethoxyuridine (cmo5U) at position 34 in tRNAs. The protein is tRNA U34 carboxymethyltransferase of Chromohalobacter salexigens (strain ATCC BAA-138 / DSM 3043 / CIP 106854 / NCIMB 13768 / 1H11).